The primary structure comprises 708 residues: Leukotoxin translocation ATP-binding protein LktB (708 aa).

The Peptidase C39 domain maps to 1 to 126; it reads MEANHQRNDL…ACYQGQLILV (126 aa). The ABC transmembrane type-1 domain maps to 155-437; it reads FLETLIVSIF…LAQLWQDFQQ (283 aa). Transmembrane regions (helical) follow at residues 159 to 179, 192 to 212, 270 to 290, 296 to 316, and 389 to 409; these read LIVS…FQVV, LNII…LSGL, ALTS…MWYY, LVIL…SPIL, and VMVI…LSIG. In terms of domain architecture, ABC transporter spans 469 to 704; it reads ISFKNIRFRY…SNGLYSYLHQ (236 aa). 503 to 510 lines the ATP pocket; the sequence is GRSGSGKS.

The protein belongs to the ABC transporter superfamily. Protein-1 exporter (TC 3.A.1.109) family. As to quaternary structure, homodimer.

The protein localises to the cell inner membrane. It catalyses the reaction ATP + H2O + proteinSide 1 = ADP + phosphate + proteinSide 2.. Its function is as follows. Part of the ABC transporter complex LktBD involved in leukotoxin export. Transmembrane domains (TMD) form a pore in the inner membrane and the ATP-binding domain (NBD) is responsible for energy generation. This Mannheimia haemolytica (Pasteurella haemolytica) protein is Leukotoxin translocation ATP-binding protein LktB (lktB).